A 380-amino-acid polypeptide reads, in one-letter code: Glucose-1-phosphate adenylyltransferase (380 aa).

Alpha-D-glucose 1-phosphate contacts are provided by residues G164, 179-180 (EK), and S190.

It belongs to the bacterial/plant glucose-1-phosphate adenylyltransferase family. As to quaternary structure, homotetramer.

It catalyses the reaction alpha-D-glucose 1-phosphate + ATP + H(+) = ADP-alpha-D-glucose + diphosphate. It participates in glycan biosynthesis; glycogen biosynthesis. Functionally, involved in the biosynthesis of ADP-glucose, a building block required for the elongation reactions to produce glycogen. Catalyzes the reaction between ATP and alpha-D-glucose 1-phosphate (G1P) to produce pyrophosphate and ADP-Glc. The polypeptide is Glucose-1-phosphate adenylyltransferase (Streptococcus pneumoniae serotype 2 (strain D39 / NCTC 7466)).